The sequence spans 111 residues: Universal stress protein B (111 aa).

Transmembrane regions (helical) follow at residues 1–21 and 90–110; these read MIST…NMAR and FILT…LMIW.

This sequence belongs to the universal stress protein B family.

Its subcellular location is the cell inner membrane. The sequence is that of Universal stress protein B from Klebsiella pneumoniae (strain 342).